Here is a 288-residue protein sequence, read N- to C-terminus: Pantothenate synthetase (288 aa).

30-37 (MGALHEGH) contacts ATP. H37 (proton donor) is an active-site residue. Q61 lines the (R)-pantoate pocket. Q61 is a beta-alanine binding site. Residue 147-150 (GEKD) coordinates ATP. Q153 contributes to the (R)-pantoate binding site. ATP is bound by residues L176 and 184 to 187 (ISSR).

The protein belongs to the pantothenate synthetase family. As to quaternary structure, homodimer.

It is found in the cytoplasm. The enzyme catalyses (R)-pantoate + beta-alanine + ATP = (R)-pantothenate + AMP + diphosphate + H(+). It functions in the pathway cofactor biosynthesis; (R)-pantothenate biosynthesis; (R)-pantothenate from (R)-pantoate and beta-alanine: step 1/1. In terms of biological role, catalyzes the condensation of pantoate with beta-alanine in an ATP-dependent reaction via a pantoyl-adenylate intermediate. The polypeptide is Pantothenate synthetase (Prosthecochloris aestuarii (strain DSM 271 / SK 413)).